Consider the following 698-residue polypeptide: Glycine--tRNA ligase beta subunit (698 aa).

The protein belongs to the class-II aminoacyl-tRNA synthetase family. In terms of assembly, tetramer of two alpha and two beta subunits.

The protein localises to the cytoplasm. The enzyme catalyses tRNA(Gly) + glycine + ATP = glycyl-tRNA(Gly) + AMP + diphosphate. This chain is Glycine--tRNA ligase beta subunit, found in Xanthomonas campestris pv. campestris (strain 8004).